A 208-amino-acid polypeptide reads, in one-letter code: Proheparin-binding EGF-like growth factor (208 aa).

The N-terminal stretch at 1-23 (MKLLPSVMLKLFLAAVLSALVTG) is a signal peptide. The propeptide occupies 24-62 (ESLERLRRGLAAATSNPDPPTGSTNQLLPTGGDRAQGVQ). Over 24–160 (ESLERLRRGL…ENPLYTYDHT (137 aa)) the chain is Extracellular. 2 disordered regions span residues 35–57 (AATSNPDPPTGSTNQLLPTGGDR) and 80–104 (PQGLATPSKERNGKKKKKGKGLGKK). A compositionally biased stretch (polar residues) spans 36–51 (ATSNPDPPTGSTNQLL). Threonine 85 carries O-linked (GalNAc...) threonine glycosylation. A compositionally biased stretch (basic residues) spans 91–102 (NGKKKKKGKGLG). The 41-residue stretch at 104–144 (KRDPCLRKYKDYCIHGECRYLQEFRTPSCKCLPGYHGHRCH) folds into the EGF-like domain. 3 cysteine pairs are disulfide-bonded: cysteine 108-cysteine 121, cysteine 116-cysteine 132, and cysteine 134-cysteine 143. The propeptide at 149 to 208 (PVENPLYTYDHTTVLAVVAVVLSSVCLLVIVGLLMFRYHRRGGYDLESEEKVKLGVASSH) is C-terminal. The chain crosses the membrane as a helical span at residues 161-184 (TVLAVVAVVLSSVCLLVIVGLLMF). Residues 185 to 208 (RYHRRGGYDLESEEKVKLGVASSH) lie on the Cytoplasmic side of the membrane.

In terms of assembly, interacts with FBLN1. Interacts with EGFR and ERBB4. O-glycosylated. Most abundant in kidney, skeletal muscle, lung, spleen, brain and heart.

It localises to the secreted. Its subcellular location is the extracellular space. The protein localises to the cell membrane. Functionally, growth factor that mediates its effects via EGFR, ERBB2 and ERBB4. Required for normal cardiac valve formation and normal heart function. Promotes smooth muscle cell proliferation. May be involved in macrophage-mediated cellular proliferation. It is mitogenic for fibroblasts, but not endothelial cells. It is able to bind EGF receptor/EGFR with higher affinity than EGF itself and is a far more potent mitogen for smooth muscle cells than EGF. Also acts as a diphtheria toxin receptor. The chain is Proheparin-binding EGF-like growth factor (Hbegf) from Mus musculus (Mouse).